We begin with the raw amino-acid sequence, 431 residues long: Adenylosuccinate synthetase (431 aa).

GTP is bound by residues 12–18 and 40–42; these read GDEGKGK and GHT. Aspartate 13 (proton acceptor) is an active-site residue. Positions 13 and 40 each coordinate Mg(2+). Residues 13-16, 38-41, threonine 131, arginine 145, glutamine 225, threonine 240, and arginine 304 contribute to the IMP site; these read DEGK and NAGH. The active-site Proton donor is the histidine 41. Residue 300–306 coordinates substrate; it reads TVTGRKR. Residues arginine 306, 332 to 334, and 414 to 416 contribute to the GTP site; these read KLD and STS.

This sequence belongs to the adenylosuccinate synthetase family. As to quaternary structure, homodimer. Mg(2+) is required as a cofactor.

Its subcellular location is the cytoplasm. It catalyses the reaction IMP + L-aspartate + GTP = N(6)-(1,2-dicarboxyethyl)-AMP + GDP + phosphate + 2 H(+). It participates in purine metabolism; AMP biosynthesis via de novo pathway; AMP from IMP: step 1/2. In terms of biological role, plays an important role in the de novo pathway of purine nucleotide biosynthesis. Catalyzes the first committed step in the biosynthesis of AMP from IMP. The protein is Adenylosuccinate synthetase of Roseobacter denitrificans (strain ATCC 33942 / OCh 114) (Erythrobacter sp. (strain OCh 114)).